The following is a 135-amino-acid chain: S-protein homolog 20 (135 aa).

Residues 1 to 26 (MNGSSAFHIILSVTFMVFLFGGLCEA) form the signal peptide. Asn88 carries an N-linked (GlcNAc...) asparagine glycan.

Belongs to the plant self-incompatibility (S1) protein family.

The protein localises to the secreted. The polypeptide is S-protein homolog 20 (Arabidopsis thaliana (Mouse-ear cress)).